The sequence spans 143 residues: Nucleoside diphosphate kinase (143 aa).

Residues Lys11, Phe59, Arg87, Thr93, Arg104, and Asn114 each coordinate ATP. The Pros-phosphohistidine intermediate role is filled by His117.

Belongs to the NDK family. As to quaternary structure, homotetramer. Mg(2+) serves as cofactor.

Its subcellular location is the cytoplasm. It carries out the reaction a 2'-deoxyribonucleoside 5'-diphosphate + ATP = a 2'-deoxyribonucleoside 5'-triphosphate + ADP. The catalysed reaction is a ribonucleoside 5'-diphosphate + ATP = a ribonucleoside 5'-triphosphate + ADP. In terms of biological role, major role in the synthesis of nucleoside triphosphates other than ATP. The ATP gamma phosphate is transferred to the NDP beta phosphate via a ping-pong mechanism, using a phosphorylated active-site intermediate. In Erwinia tasmaniensis (strain DSM 17950 / CFBP 7177 / CIP 109463 / NCPPB 4357 / Et1/99), this protein is Nucleoside diphosphate kinase.